The sequence spans 444 residues: Presenilin sel-12 (444 aa).

At Met-1–Tyr-45 the chain is on the cytoplasmic side. A helical membrane pass occupies residues Gly-46–Phe-66. Over Thr-67–Ser-101 the chain is Lumenal. A helical transmembrane segment spans residues Leu-102 to Phe-122. The Cytoplasmic segment spans residues Tyr-123 to Leu-130. A helical transmembrane segment spans residues Ile-131–Val-151. The Lumenal segment spans residues Gln-152–Ser-163. Residues Ala-164–Trp-184 form a helical membrane-spanning segment. Residues Lys-185 to Arg-189 lie on the Cytoplasmic side of the membrane. The helical transmembrane segment at Leu-190–Leu-210 threads the bilayer. The Lumenal portion of the chain corresponds to Pro-211–Glu-212. Residues Trp-213 to Pro-233 traverse the membrane as a helical segment. Asp-226 is a catalytic residue. At Lys-234–Lys-359 the chain is on the cytoplasmic side. The tract at residues Thr-275–Arg-331 is disordered. 2 stretches are compositionally biased toward polar residues: residues Ser-282–Glu-300 and Gln-315–Gly-329. A helical transmembrane segment spans residues Leu-360 to Asp-380. The active site involves Asp-364. Residues Trp-381–Thr-384 lie on the Lumenal side of the membrane. Residues Ile-385–Phe-405 traverse the membrane as a helical segment. Over Lys-406–Pro-413 the chain is Cytoplasmic. The short motif at Pro-410–Leu-412 is the PAL element. The helical intramembrane region spans Ile-414 to Val-434. The Cytoplasmic portion of the chain corresponds to Thr-435–Tyr-444.

This sequence belongs to the peptidase A22A family. As to quaternary structure, homodimer. Component of the gamma-secretase complex, a complex probably composed of the presenilin homodimer (sel-12, hop-1 or spe-4), nicastrin (aph-2), aph-1 and pen-2. Interacts with sel-10. As to expression, expressed in most neurons.

It is found in the endoplasmic reticulum membrane. The protein localises to the golgi apparatus membrane. Probable catalytic subunit of the gamma-secretase complex, an endoprotease complex that catalyzes the intramembrane cleavage of integral membrane proteins such as Notch receptors (lin-12 or glp-1). Provides the major presenilin function compared to hop-1 and spe-4. Required cell-autonomously for correct neurite connectivity of the AIY cholinergic interneurons and their correct functioning in thermotaxis. Required for mesodermal patterning of muscle function. Promotes basement membrane gap formation during tissue remodeling. The sequence is that of Presenilin sel-12 from Caenorhabditis elegans.